Reading from the N-terminus, the 382-residue chain is MQPHYDLILVGAGLANGLIALRLQQQQPDMRILLIDAAPQAGGNHTWSFHHDDLTESQHRWIAPLVVHHWPDYQVRFPTRRRKLNSGYFCITSQRFAEVLQRQFGPHLWMDTAVAEVNAESVRLKKGQVIGARAVIDGRGYAANSALSVGFQAFIGQEWRLSHPHGLSSPIIMDATVDQQNGYRFVYSLPLSPTRLLIEDTHYIDNATLDPECARQNICDYAAQQGWQLQTLLREEQGALPITLSGNADAFWQQRPLACSGLRAGLFHPTTGYSLPLAVAVADRLSALDVFTSASIHHAITHFARERWQQQGFFRMLNRMLFLAGPADSRWRVMQRFYGLPEDLIARFYAGKLTLTDRLRILSGKPPVPVLAALQAIMTTHR.

NAD(+) is bound at residue 6-36 (DLILVGAGLANGLIALRLQQQQPDMRILLID).

Belongs to the lycopene cyclase family. Requires FAD as cofactor.

The protein resides in the cell inner membrane. The enzyme catalyses a carotenoid psi-end group = a carotenoid beta-end derivative. It carries out the reaction all-trans-lycopene = gamma-carotene. The catalysed reaction is gamma-carotene = all-trans-beta-carotene. It catalyses the reaction all-trans-neurosporene = beta-zeacarotene. The enzyme catalyses beta-zeacarotene = 7,8-dihydro-beta-carotene. It participates in carotenoid biosynthesis; beta-carotene biosynthesis. With respect to regulation, activity is increased in the presence of NAD(P)H. NADPH is not involved directly in the cyclization reaction, but must play an indirect role, e.g. as an allosteric activator. In terms of biological role, catalyzes the double cyclization reaction which converts lycopene to beta-carotene. Also catalyzes the double cyclization reaction which converts neurosporene to 7,8-dihydro-beta-carotene via monocyclic beta-zeacarotene. May also convert zeta-carotene to bicyclic 7,8,7',8'-tetrahydro-beta-carotene. The sequence is that of Lycopene beta-cyclase from Pantoea ananas (Erwinia uredovora).